The chain runs to 79 residues: Small ribosomal subunit protein bS18 (79 aa).

The protein belongs to the bacterial ribosomal protein bS18 family. As to quaternary structure, part of the 30S ribosomal subunit. Forms a tight heterodimer with protein bS6.

In terms of biological role, binds as a heterodimer with protein bS6 to the central domain of the 16S rRNA, where it helps stabilize the platform of the 30S subunit. The chain is Small ribosomal subunit protein bS18 from Aster yellows witches'-broom phytoplasma (strain AYWB).